Here is an 894-residue protein sequence, read N- to C-terminus: Exocyst complex component 2 (894 aa).

Residues Pro5 to Tyr89 enclose the IPT/TIG domain. Basic and acidic residues predominate over residues His398–Asp413. Residues His398–Ala417 form a disordered region.

This sequence belongs to the SEC5 family. The exocyst complex is composed of Sec3/Exoc1, Sec5/Exoc2, Sec6/Exoc3, Sec8/Exoc4, Sec10/Exoc5, Sec15/Exoc6, Exo70/Exoc7 and Exo84/Exoc8.

In terms of biological role, component of the exocyst complex involved in the docking of exocytic vesicles with fusion sites on the plasma membrane. In Drosophila melanogaster (Fruit fly), this protein is Exocyst complex component 2.